A 188-amino-acid chain; its full sequence is 2-amino-4-hydroxy-6-hydroxymethyldihydropteridine pyrophosphokinase (188 aa).

It belongs to the HPPK family.

The catalysed reaction is 6-hydroxymethyl-7,8-dihydropterin + ATP = (7,8-dihydropterin-6-yl)methyl diphosphate + AMP + H(+). It participates in cofactor biosynthesis; tetrahydrofolate biosynthesis; 2-amino-4-hydroxy-6-hydroxymethyl-7,8-dihydropteridine diphosphate from 7,8-dihydroneopterin triphosphate: step 4/4. Catalyzes the transfer of pyrophosphate from adenosine triphosphate (ATP) to 6-hydroxymethyl-7,8-dihydropterin, an enzymatic step in folate biosynthesis pathway. This chain is 2-amino-4-hydroxy-6-hydroxymethyldihydropteridine pyrophosphokinase (folK), found in Mycobacterium tuberculosis (strain ATCC 25618 / H37Rv).